Here is a 118-residue protein sequence, read N- to C-terminus: Holin-like protein CidA 2 (118 aa).

4 consecutive transmembrane segments (helical) span residues 5–27 (MLLL…QGVF), 31–50 (MPGS…TRIL), 62–84 (LLVF…ESFL), and 88–110 (GSII…GYIS).

It belongs to the CidA/LrgA family. CidA subfamily.

It is found in the cell membrane. In terms of biological role, increases the activity of extracellular murein hydrolases possibly by mediating their export via hole formation. Inhibited by the antiholin-like proteins LrgAB. In an unstressed cell, the LrgAB products probably inhibit the function of the CidA protein. When a cell is stressed by the addition of antibiotics or by other factors in the environment, CidA possibly oligomerizes within the bacterial cell membrane, creating lesions that disrupt the proton motive force, which in turn results in loss of cell viability. These lesions are also hypothesized to regulate the subsequent cell lysis by either allowing the murein hydrolases access to the cell wall substrate and/or regulating their activity by a possible change in the cell wall pH that results from loss of membrane potential. The polypeptide is Holin-like protein CidA 2 (cidA2) (Bacillus anthracis).